The sequence spans 293 residues: 1D-myo-inositol 2-acetamido-2-deoxy-alpha-D-glucopyranoside deacetylase 2 (293 aa).

Zn(2+) is bound by residues His6, Asp9, and His142.

The protein belongs to the MshB deacetylase family. Zn(2+) serves as cofactor.

The catalysed reaction is 1D-myo-inositol 2-acetamido-2-deoxy-alpha-D-glucopyranoside + H2O = 1D-myo-inositol 2-amino-2-deoxy-alpha-D-glucopyranoside + acetate. Catalyzes the deacetylation of 1D-myo-inositol 2-acetamido-2-deoxy-alpha-D-glucopyranoside (GlcNAc-Ins) in the mycothiol biosynthesis pathway. The sequence is that of 1D-myo-inositol 2-acetamido-2-deoxy-alpha-D-glucopyranoside deacetylase 2 from Frankia alni (strain DSM 45986 / CECT 9034 / ACN14a).